The chain runs to 3814 residues: Hybrid PKS-NRPS synthetase pyvA (3814 aa).

Residues 1–340 form the Ketosynthase family 3 (KS3) domain; it reads MDPQQRLLLE…GSNAHVILES (340 aa). Residues Cys87, His222, and His261 each act as for beta-ketoacyl synthase activity in the active site. Residues 441-758 are malonyl-CoA:ACP transacylase (MAT) domain; that stretch reads VFTGQGAQWH…PYFASLSRGV (318 aa). The For malonyltransferase activity role is filled by Ser533. Positions 835–970 are N-terminal hotdog fold; it reads HPILGAKMPG…GLISISTATT (136 aa). Residues 835–1149 form a dehydratase (DH) domain region; it reads HPILGAKMPG…LRLTSLSNGR (315 aa). The PKS/mFAS DH domain occupies 835 to 1151; sequence HPILGAKMPG…LTSLSNGRAA (317 aa). The Proton acceptor; for dehydratase activity role is filled by His867. Residues 970–993 form a disordered region; that stretch reads TADGAPSRKPYRQHPQPQPGRMST. A C-terminal hotdog fold region spans residues 991-1151; it reads MSTASFPAQS…LTSLSNGRAA (161 aa). The Proton donor; for dehydratase activity role is filled by Asp1057. An enoyl reductase (ER) domain region spans residues 1520–1836; sequence GLLETLVWED…MGRHTGKVVL (317 aa). The tract at residues 1864 to 2036 is ketoreductase (KR) domain; the sequence is TYLLVGGLGG…PASSMNCGRI (173 aa). In terms of domain architecture, Carrier 1 spans 2141–2220; it reads IDLSDRVALL…ALVEKAIGLF (80 aa). Ser2180 carries the post-translational modification O-(pantetheine 4'-phosphoryl)serine. Residues 2228 to 2238 are compositionally biased toward low complexity; that stretch reads QQQQQSVQSSS. Residues 2228 to 2270 form a disordered region; the sequence is QQQQQSVQSSSAPSNDDQSPTFNKNLDSQDPSTSLQIPKADCS. Residues 2239–2263 are compositionally biased toward polar residues; it reads APSNDDQSPTFNKNLDSQDPSTSLQ. A condensation (C) domain 7 region spans residues 2273–2718; that stretch reads LPMSTFQNRL…PEVRLAGTLE (446 aa). The tract at residues 2738 to 3149 is adenylation (A) domain 8; it reads PLNLPRRIVE…DGQLEFLGRI (412 aa). Residues 3257–3304 form a disordered region; it reads SGKTDRRALGASQAPGTPPQHGAGPAAASTLDPAQAQAQDRADEEVGD. The Carrier 2 domain occupies 3304–3379; that stretch reads DRTMATVTRV…QLVELVHSKV (76 aa). Ser3339 bears the O-(pantetheine 4'-phosphoryl)serine mark. The interval 3428–3680 is thioesterase (TE) domain; sequence MTGAESFTGI…VDLVPVNYLT (253 aa).

In the C-terminal section; belongs to the NRP synthetase family.

It functions in the pathway secondary metabolite biosynthesis. In terms of biological role, hybrid PKS-NRPS synthetase; part of the gene cluster that mediates the biosynthesis of pyranoviolin A, a pyranonigrin analog with a C-3 methoxy group. Initially, the PKS portion of pyvA synthesizes C-10 carbon chain from 5 molecules of malonyl-CoA, which is then condensed with the thiolation (T) domain-bound glycine activated by the adenylation (A) domain. The subsequent chain release by Dieckmann condensation (DKC) could be catalyzed by the TE domain present at the C-terminus of pyvA and/or the alpha/beta hydrolase pyvD, installing the tetramic acid moiety. The FAD-dependent monooxygenase pyvC next epoxidizes one of the olefins of the polyketide part, and the epoxide ring-opening induces the dihydro-gamma-pyrone ring formation. The cytochrome P450 monooxygeanse pyvB would be responsible for the 2 consecutive reactions, in which the dihydro-gamma-pyrone is oxidized to gamma-pyrone and C-7 is hydroxylated to yield pyranonigrin F. Finally, the O-methyltransferase pyvH methylates the C-3 hydroxy group to complete the biosynthesis. The sequence is that of Hybrid PKS-NRPS synthetase pyvA from Aspergillus violaceofuscus (strain CBS 115571).